The sequence spans 581 residues: Intermediate filament protein ifa-3 (581 aa).

Residues 1–33 (MADPDSYRSSITSRPAFNRTVTSSTQNYGTPAS) form a disordered region. A head region spans residues 1-74 (MADPDSYRSS…RDDREREKKE (74 aa)). Residues 7–33 (YRSSITSRPAFNRTVTSSTQNYGTPAS) are compositionally biased toward polar residues. Residues 71–424 (EKKEITELND…RMLEGNSEEN (354 aa)) form the IF rod domain. Positions 75-106 (ITELNDRLASYIGKVRFLAAQNRKLEADLNVL) are coil 1A. The tract at residues 107–120 (QSRFGKSTGSVKIM) is linker 1. Positions 121–258 (YEMEITTATN…RGFETELKDL (138 aa)) are coil 1B. The linker 12 stretch occupies residues 259–276 (QAQAARDTTSENREYFKN). The interval 277 to 424 (ELMNSIRDIR…RMLEGNSEEN (148 aa)) is coil 2. The tail stretch occupies residues 425 to 578 (GLRQLVEKVV…THMQRQSQQT (154 aa)). Positions 457–574 (SRTSYQRSAK…EERATHMQRQ (118 aa)) constitute an LTD domain.

This sequence belongs to the intermediate filament family. As to quaternary structure, forms some heteromeric filaments with ifb-1. As to expression, expressed in the embryonic and larval hypodermis. Also expressed in the ventral nerve cord of larvae.

The protein localises to the cytoplasm. Its function is as follows. Cytoplasmic intermediate filaments provide mechanical strength to cells. Essential protein, involved in attachment structures in epidermal cells that connect muscles to the external cuticle. Required for epidermal morphogenesis in embryos. Probable component of embryonic epidermal attachment structures. The protein is Intermediate filament protein ifa-3 (ifa-3) of Caenorhabditis elegans.